The following is an 83-amino-acid chain: Small ribosomal subunit protein eS21 (83 aa).

Belongs to the eukaryotic ribosomal protein eS21 family. Component of the 40S small ribosomal subunit. Interacts with sta.

The protein localises to the cytoplasm. It localises to the cytosol. It is found in the rough endoplasmic reticulum. The sequence is that of Small ribosomal subunit protein eS21 (RpS21) from Ceratitis capitata (Mediterranean fruit fly).